The following is a 305-amino-acid chain: Popeye domain-containing protein 3 (305 aa).

The N-linked (GlcNAc...) asparagine glycan is linked to N4. 3 helical membrane passes run 34–54, 55–75, and 77–99; these read SILF…LYVF, SLLG…VCAA, and IFSW…TYQV. Residues 273-305 are disordered; that stretch reads PETPPVPPPRRLQRRSSGRPRPGVPNCSSPRKQ. N-linked (GlcNAc...) asparagine glycosylation occurs at N298.

It belongs to the popeye family. As to expression, expressed first preferentially in atrium and later also in the subepicardial compact layer of the ventricles.

Its subcellular location is the membrane. In terms of biological role, may play a role in the maintenance of heart function mediated, at least in part, through cAMP-binding. May play a role in the regulation of KCNK2-mediated current amplitude. The polypeptide is Popeye domain-containing protein 3 (POPDC3) (Gallus gallus (Chicken)).